The sequence spans 359 residues: Membrane-bound lytic murein transglycosylase C (359 aa).

A signal peptide spans 1 to 16 (MKKYLALALIAPLLIS). The N-palmitoyl cysteine moiety is linked to residue cysteine 17. Cysteine 17 carries the S-diacylglycerol cysteine lipid modification.

It belongs to the transglycosylase Slt family.

It is found in the cell outer membrane. The catalysed reaction is Exolytic cleavage of the (1-&gt;4)-beta-glycosidic linkage between N-acetylmuramic acid (MurNAc) and N-acetylglucosamine (GlcNAc) residues in peptidoglycan, from either the reducing or the non-reducing ends of the peptidoglycan chains, with concomitant formation of a 1,6-anhydrobond in the MurNAc residue.. Murein-degrading enzyme. May play a role in recycling of muropeptides during cell elongation and/or cell division. The chain is Membrane-bound lytic murein transglycosylase C from Shigella sonnei (strain Ss046).